Reading from the N-terminus, the 677-residue chain is MIQRAEAVLSVLGELQEATECVGLDALTKVAVEVEQVLAPFPLPTAPCSEISSWQGIDAVAHRLYPGDAPTGLLPLVCKGEGNLLFDAASMLLVGSTSLSLELQVRAVVEMLIWKRYYLCGMIDSKVMLQAARFSLCAEESQDMLNLPIQVLEAIFDADVKASCFHGSFANMWHVYALASVLQCNIYSVYPMYNLKIRPYFNRLIRPRIWSKDTEPLTLHIMWSGDLEAGSVFKPHKFVALIHASDLKIGSPNSEQRMPLVKSLELQNQDTQLSYSNLKNKFNITKSTFYRWKRQSIEYHKKSVARYEAKHFFLTSYKQGKLIPLSQFKELFPEIPRSTYYAWKQELVSCCSLSGGSTGELSPGDSTEQDYWSSPEVKKTPGQGSFANMLAFKYEKLEGERNQNVTLMQEAKKSLQDCIVANTSFPYRIFKRKFPGISRSTYYNWRREAMLFIPFKEHSGSSEEGSDADKSQSPRSQMSPSKFDRQKLSPRVRISRRKHRSLRLAYHHRKMLREEAKMHIRRSKMSFIKFKLKFPTVSSSFYWLWRVSLNRKPEKPAVMSNSEESKSLAISPDVFQKIKTQGMFSFDGNIDCLNGQTEFTMPEYSPPDQSTNDHMFVMDVVALANFKAKAKLFLQQRFEEKAFPTFKEFRSYFPLTPRSTYYMWKRALHHGVPLIHA.

Disordered regions lie at residues 356–376 (GSTG…SSPE) and 458–490 (HSGS…KLSP). A compositionally biased stretch (basic and acidic residues) spans 458 to 472 (HSGSSEEGSDADKSQ).

Belongs to the vertnin family.

It is found in the nucleus. Its function is as follows. Functions as a transcriptional repressor that modulates bmp2b expression during dorsoventral patterning. The chain is Vertnin (vrtn) from Danio rerio (Zebrafish).